Here is a 291-residue protein sequence, read N- to C-terminus: Probable ABC transporter permease protein PH1038 (291 aa).

Transmembrane regions (helical) follow at residues 7-27 (PFFF…YPVF), 75-95 (IVWI…FALL), 106-126 (IIKS…GLII), 133-153 (GAGV…AITW), 160-180 (ALFS…MLMY), 208-228 (FVIW…TLLW), 232-252 (IFDI…MVLA), and 267-287 (YAAV…LWLI). An ABC transmembrane type-1 domain is found at 71 to 286 (LIHNIVWIAI…ALTFIPALWL (216 aa)).

The protein belongs to the binding-protein-dependent transport system permease family. MalFG subfamily.

The protein resides in the cell membrane. Probably part of a binding-protein-dependent transport system PH1036/38/39. Probably responsible for the translocation of the substrate across the membrane. This chain is Probable ABC transporter permease protein PH1038, found in Pyrococcus horikoshii (strain ATCC 700860 / DSM 12428 / JCM 9974 / NBRC 100139 / OT-3).